Reading from the N-terminus, the 431-residue chain is Adenylosuccinate synthetase (431 aa).

Residues Gly-12–Lys-18 and Gly-40–Thr-42 each bind GTP. Asp-13 functions as the Proton acceptor in the catalytic mechanism. Mg(2+)-binding residues include Asp-13 and Gly-40. IMP is bound by residues Asp-13–Lys-16, Asn-38–His-41, Thr-131, Arg-145, Gln-225, Thr-240, and Arg-304. His-41 serves as the catalytic Proton donor. Residue Val-300–Arg-306 participates in substrate binding. Residues Arg-306, Lys-332–Asp-334, and Ser-414–Ser-416 contribute to the GTP site.

This sequence belongs to the adenylosuccinate synthetase family. In terms of assembly, homodimer. Requires Mg(2+) as cofactor.

The protein resides in the cytoplasm. The enzyme catalyses IMP + L-aspartate + GTP = N(6)-(1,2-dicarboxyethyl)-AMP + GDP + phosphate + 2 H(+). It participates in purine metabolism; AMP biosynthesis via de novo pathway; AMP from IMP: step 1/2. Functionally, plays an important role in the de novo pathway of purine nucleotide biosynthesis. Catalyzes the first committed step in the biosynthesis of AMP from IMP. The sequence is that of Adenylosuccinate synthetase from Beijerinckia indica subsp. indica (strain ATCC 9039 / DSM 1715 / NCIMB 8712).